The chain runs to 89 residues: Small ribosomal subunit protein uS15 (89 aa).

Belongs to the universal ribosomal protein uS15 family. In terms of assembly, part of the 30S ribosomal subunit. Forms a bridge to the 50S subunit in the 70S ribosome, contacting the 23S rRNA.

In terms of biological role, one of the primary rRNA binding proteins, it binds directly to 16S rRNA where it helps nucleate assembly of the platform of the 30S subunit by binding and bridging several RNA helices of the 16S rRNA. Its function is as follows. Forms an intersubunit bridge (bridge B4) with the 23S rRNA of the 50S subunit in the ribosome. In Kineococcus radiotolerans (strain ATCC BAA-149 / DSM 14245 / SRS30216), this protein is Small ribosomal subunit protein uS15.